Consider the following 230-residue polypeptide: uncharacterized protein (230 aa).

In terms of domain architecture, ABC transporter spans 2–230; sequence IQLSNVRKSY…ASSGQRSVGE (229 aa). ATP is bound at residue 38-45; sequence GPSGSGKS.

Belongs to the ABC transporter superfamily. In terms of assembly, part of a complex composed of YknX, YknY and YknZ. The complex interacts with YknW.

The protein resides in the cell membrane. Part of an unusual four-component transporter, which is required for protection against the killing factor SdpC (sporulation-delaying protein). This is an uncharacterized protein from Bacillus subtilis (strain 168).